Here is a 224-residue protein sequence, read N- to C-terminus: Cytidylate kinase (224 aa).

Gly11 to Thr19 contributes to the ATP binding site.

The protein belongs to the cytidylate kinase family. Type 1 subfamily.

It is found in the cytoplasm. It catalyses the reaction CMP + ATP = CDP + ADP. It carries out the reaction dCMP + ATP = dCDP + ADP. The sequence is that of Cytidylate kinase (cmk) from Bacillus subtilis (strain 168).